A 527-amino-acid polypeptide reads, in one-letter code: UPF0053 protein YegH (527 aa).

The next 7 membrane-spanning stretches (helical) occupy residues 14–34 (ITLIVIELVLGIDNLVFIAIL), 51–71 (LLLAMLMRLLLLASISWLVTL), 81–101 (FTFSARDLIMLFGGFFLLFKA), 122–142 (GAKFWGVVTQIVVLDAIFSLD), 145–165 (ITAVGMVDHLLVMMAAVVIAI), 185–205 (IVILCLSFLLMIGFSLVAEGF), and 207–227 (FVIPKGYLYAAIGFSVMIEAL). 2 CBS domains span residues 306–366 (MTSR…GEPL) and 371–429 (LIRQ…PNEV).

The protein belongs to the UPF0053 family.

The protein resides in the cell membrane. In Shigella flexneri, this protein is UPF0053 protein YegH (yegH).